Here is a 119-residue protein sequence, read N- to C-terminus: Putative mating-type protein A2 (119 aa).

Residues 38–100 (KPYRGHRFTK…NRRRKEKTIT (63 aa)) constitute a DNA-binding region (homeobox; TALE-type).

The protein belongs to the TALE/M-ATYP homeobox family.

The protein localises to the nucleus. In terms of biological role, probably not a functional protein. Cells lacking A2 show no obvious alterations in mating, sporulation and cell growth. This Saccharomyces cerevisiae (Baker's yeast) protein is Putative mating-type protein A2 (MATA2).